A 227-amino-acid polypeptide reads, in one-letter code: Octanoyltransferase (227 aa).

In terms of domain architecture, BPL/LPL catalytic spans 47 to 223 (EDTADEIWLL…HLLRLLPPGV (177 aa)). Substrate contacts are provided by residues 87–94 (RGGQITYH), 154–156 (ALG), and 167–169 (GLA). Catalysis depends on C185, which acts as the Acyl-thioester intermediate.

The protein belongs to the LipB family.

It localises to the cytoplasm. It carries out the reaction octanoyl-[ACP] + L-lysyl-[protein] = N(6)-octanoyl-L-lysyl-[protein] + holo-[ACP] + H(+). It functions in the pathway protein modification; protein lipoylation via endogenous pathway; protein N(6)-(lipoyl)lysine from octanoyl-[acyl-carrier-protein]: step 1/2. Its function is as follows. Catalyzes the transfer of endogenously produced octanoic acid from octanoyl-acyl-carrier-protein onto the lipoyl domains of lipoate-dependent enzymes. Lipoyl-ACP can also act as a substrate although octanoyl-ACP is likely to be the physiological substrate. The chain is Octanoyltransferase from Azoarcus sp. (strain BH72).